A 264-amino-acid chain; its full sequence is Major prion protein (264 aa).

The first 24 residues, 1 to 24, serve as a signal peptide directing secretion; that stretch reads MVKSHIGSWILVLFVAMWSDVGLC. The interaction with GRB2, ERI3 and SYN1 stretch occupies residues 25-241; sequence KKRPKPGGGW…ESQAYYQRGA (217 aa). The interval 28 to 118 is disordered; it reads PKPGGGWNTG…QWNKPSKPKT (91 aa). Positions 37 to 54 are enriched in low complexity; that stretch reads GGSRYPGPGSPGGNRYPP. Tandem repeats lie at residues 54–62, 63–70, 71–78, 79–86, 87–94, and 95–103. Residues 54-103 are 6 X 8 AA tandem repeats of P-H-G-G-G-W-G-Q; it reads PQGGGGWGQPHGGGWGQPHGGGWGQPHGGGWGQPHGGGWGQPHGGGGWGQ. The span at 55–107 shows a compositional bias: gly residues; it reads QGGGGWGQPHGGGWGQPHGGGWGQPHGGGWGQPHGGGWGQPHGGGGWGQGGTH. The Cu(2+) site is built by H72, G73, G74, H80, G81, G82, H88, G89, G90, H96, and G98. C190 and C225 form a disulfide bridge. 2 N-linked (GlcNAc...) asparagine glycosylation sites follow: N192 and N208. A241 is lipidated: GPI-anchor amidated alanine. A propeptide spans 242–264 (removed in mature form); it reads SVILFSSPPVILLISFLIFLIVG.

This sequence belongs to the prion family. Monomer and homodimer. Has a tendency to aggregate into amyloid fibrils containing a cross-beta spine, formed by a steric zipper of superposed beta-strands. Soluble oligomers may represent an intermediate stage on the path to fibril formation. Copper binding may promote oligomerization. Interacts with GRB2, APP, ERI3/PRNPIP and SYN1. Mislocalized cytosolically exposed PrP interacts with MGRN1; this interaction alters MGRN1 subcellular location and causes lysosomal enlargement. Interacts with KIAA1191.

The protein resides in the cell membrane. The protein localises to the golgi apparatus. In terms of biological role, its primary physiological function is unclear. Has cytoprotective activity against internal or environmental stresses. May play a role in neuronal development and synaptic plasticity. May be required for neuronal myelin sheath maintenance. May play a role in iron uptake and iron homeostasis. Soluble oligomers are toxic to cultured neuroblastoma cells and induce apoptosis (in vitro). Association with GPC1 (via its heparan sulfate chains) targets PRNP to lipid rafts. Also provides Cu(2+) or Zn(2+) for the ascorbate-mediated GPC1 deaminase degradation of its heparan sulfate side chains. This is Major prion protein (PRNP) from Ailuropoda melanoleuca (Giant panda).